Here is a 216-residue protein sequence, read N- to C-terminus: Uracil-DNA glycosylase (216 aa).

Catalysis depends on Asp-59, which acts as the Proton acceptor.

It belongs to the uracil-DNA glycosylase (UDG) superfamily. UNG family.

Its subcellular location is the cytoplasm. The enzyme catalyses Hydrolyzes single-stranded DNA or mismatched double-stranded DNA and polynucleotides, releasing free uracil.. In terms of biological role, excises uracil residues from the DNA which can arise as a result of misincorporation of dUMP residues by DNA polymerase or due to deamination of cytosine. This chain is Uracil-DNA glycosylase, found in Idiomarina loihiensis (strain ATCC BAA-735 / DSM 15497 / L2-TR).